The sequence spans 337 residues: Glycerol-3-phosphate dehydrogenase [NAD(P)+] 2 (337 aa).

The NADPH site is built by threonine 11, tryptophan 12, and lysine 105. The sn-glycerol 3-phosphate site is built by lysine 105, glycine 139, and threonine 141. Position 143 (alanine 143) interacts with NADPH. Sn-glycerol 3-phosphate is bound by residues lysine 194, aspartate 247, serine 257, arginine 258, and asparagine 259. Lysine 194 acts as the Proton acceptor in catalysis. Position 258 (arginine 258) interacts with NADPH. 2 residues coordinate NADPH: valine 282 and glutamate 284.

It belongs to the NAD-dependent glycerol-3-phosphate dehydrogenase family.

It localises to the cytoplasm. The catalysed reaction is sn-glycerol 3-phosphate + NAD(+) = dihydroxyacetone phosphate + NADH + H(+). It catalyses the reaction sn-glycerol 3-phosphate + NADP(+) = dihydroxyacetone phosphate + NADPH + H(+). The protein operates within membrane lipid metabolism; glycerophospholipid metabolism. In terms of biological role, catalyzes the reduction of the glycolytic intermediate dihydroxyacetone phosphate (DHAP) to sn-glycerol 3-phosphate (G3P), the key precursor for phospholipid synthesis. The sequence is that of Glycerol-3-phosphate dehydrogenase [NAD(P)+] 2 from Lactobacillus delbrueckii subsp. bulgaricus (strain ATCC 11842 / DSM 20081 / BCRC 10696 / JCM 1002 / NBRC 13953 / NCIMB 11778 / NCTC 12712 / WDCM 00102 / Lb 14).